A 229-amino-acid chain; its full sequence is MAKKGKKFQDAAKQVEALKAYAPKEALELVKKIDFAKFDATVETVYKLNVDTKQADQQLRGAVVLPNGTGKEQTVIVFAKGAKAEAAKAAGADVVGDDDLVQRIQDGWLDFDVAIATPDMMGQVGRLGRVLGPKNLMPNPKTGTVTMDVEKAVADSKSGKVTYRTDRDGNVHVPIGKVSFDVDQLLGNLQTINDTIVRLRPASVKGAYVQNVSVASTFGPGVKVDFSQF.

Belongs to the universal ribosomal protein uL1 family. In terms of assembly, part of the 50S ribosomal subunit.

Binds directly to 23S rRNA. The L1 stalk is quite mobile in the ribosome, and is involved in E site tRNA release. Functionally, protein L1 is also a translational repressor protein, it controls the translation of the L11 operon by binding to its mRNA. This Pediococcus pentosaceus (strain ATCC 25745 / CCUG 21536 / LMG 10740 / 183-1w) protein is Large ribosomal subunit protein uL1.